A 148-amino-acid polypeptide reads, in one-letter code: Short form salivary protein D7S1 (148 aa).

A signal peptide spans 1–21; it reads MKQNVFFLIAYFSLVFCMCNA. Cystine bridges form between Cys28-Cys61, Cys41-Cys147, and Cys103-Cys119.

This sequence belongs to the PBP/GOBP family. Female salivary gland.

It localises to the secreted. In terms of biological role, in contrast to the related D7 salivary proteins that can bind biogenic amines, does not bind serotonin. This Aedes aegypti (Yellowfever mosquito) protein is Short form salivary protein D7S1.